A 367-amino-acid chain; its full sequence is Putative heat shock 70 kDa protein 7 (367 aa).

This sequence belongs to the heat shock protein 70 family.

In Homo sapiens (Human), this protein is Putative heat shock 70 kDa protein 7 (HSPA7).